Here is a 498-residue protein sequence, read N- to C-terminus: Lysine--tRNA ligase (498 aa).

Mg(2+) is bound by residues Glu-407 and Glu-414.

It belongs to the class-II aminoacyl-tRNA synthetase family. In terms of assembly, homodimer. Mg(2+) serves as cofactor.

The protein resides in the cytoplasm. The catalysed reaction is tRNA(Lys) + L-lysine + ATP = L-lysyl-tRNA(Lys) + AMP + diphosphate. The protein is Lysine--tRNA ligase of Rhizobium etli (strain CIAT 652).